Reading from the N-terminus, the 341-residue chain is ATP-dependent 6-phosphofructokinase 3 (341 aa).

Residues Gly-10, 72 to 73 (RV), and 102 to 105 (GEGT) contribute to the ATP site. Glu-103 contacts Mg(2+). Residues 125–127 (TID), Arg-162, 169–171 (MGR), Glu-222, Arg-266, and 272–275 (HVQR) contribute to the substrate site. Residue Asp-127 is the Proton acceptor of the active site.

This sequence belongs to the phosphofructokinase type A (PFKA) family. Mixed-substrate PFK group III subfamily. In terms of assembly, homodimer or homotetramer. Mg(2+) serves as cofactor.

Its subcellular location is the cytoplasm. It carries out the reaction beta-D-fructose 6-phosphate + ATP = beta-D-fructose 1,6-bisphosphate + ADP + H(+). It functions in the pathway carbohydrate degradation; glycolysis; D-glyceraldehyde 3-phosphate and glycerone phosphate from D-glucose: step 3/4. Catalyzes the phosphorylation of D-fructose 6-phosphate to fructose 1,6-bisphosphate by ATP, the first committing step of glycolysis. This Streptomyces coelicolor (strain ATCC BAA-471 / A3(2) / M145) protein is ATP-dependent 6-phosphofructokinase 3.